The primary structure comprises 205 residues: Large ribosomal subunit protein uL4 (205 aa).

The tract at residues 43–96 (GKRQGTSKVKNRSAVRGGGKKPWRQKGTGRARQGSIRSPQWRGGGTVFGPTPRS) is disordered. Residues 51-71 (VKNRSAVRGGGKKPWRQKGTG) show a composition bias toward basic residues.

This sequence belongs to the universal ribosomal protein uL4 family. As to quaternary structure, part of the 50S ribosomal subunit.

One of the primary rRNA binding proteins, this protein initially binds near the 5'-end of the 23S rRNA. It is important during the early stages of 50S assembly. It makes multiple contacts with different domains of the 23S rRNA in the assembled 50S subunit and ribosome. In terms of biological role, forms part of the polypeptide exit tunnel. The protein is Large ribosomal subunit protein uL4 of Lactobacillus helveticus (strain DPC 4571).